Consider the following 83-residue polypeptide: UPF0297 protein LCK_00468 (83 aa).

The protein belongs to the UPF0297 family.

This is UPF0297 protein LCK_00468 from Leuconostoc citreum (strain KM20).